A 289-amino-acid chain; its full sequence is MDGHQHHHLHQLQYLNKHHLHTQSQTPEIASPVAVGDRFPQWSVEETKELIGIRGELDQTFMETKRNKLLWEVISNKMRDKSFPRSPEQCKCKWKNLVTRFKGCETMEAETARQQFPFYDDMQNIFTTRMQRMLWAESEGGGGGTSGAARKREYSSDEEEENVNEELVDVSNDPKILNPKKNIAKKRKGGSNSSNSNNGVREVLEEFMRHQVRMESEWREGWEAREKERAEKEEEWRRKMEELEKERLAMERMWRDREEQRRSREEMRAEKRDSLINALLAKLTRDGSL.

Residues 42-98 (WSVEETKELIGIRGELDQTFMETKRNKLLWEVISNKMRDKSFPRSPEQCKCKWKNLV) form the Myb-like domain. Residues 65–81 (KRNKLLWEVISNKMRDK) carry the Bipartite nuclear localization signal motif. Residues 137–200 (ESEGGGGGTS…SNSSNSNNGV (64 aa)) form a disordered region. Positions 156-168 (SDEEEENVNEELV) are enriched in acidic residues. The short motif at 179–188 (PKKNIAKKRK) is the Nuclear localization signal element. Low complexity predominate over residues 190 to 199 (GSNSSNSNNG). Residues 223-275 (EAREKERAEKEEEWRRKMEELEKERLAMERMWRDREEQRRSREEMRAEKRDSL) adopt a coiled-coil conformation.

In terms of assembly, heterodimer with GT-3A. Associated with the mediator complex.

It is found in the nucleus. Its function is as follows. Probable transcription factor that may play a role in the induction of CAM4 in response to pathogen and salt. In Arabidopsis thaliana (Mouse-ear cress), this protein is Trihelix transcription factor GT-3b (GT-3B).